The following is a 201-amino-acid chain: Transcription factor MYB82 (201 aa).

HTH myb-type domains are found at residues 9–61 (KSYV…KNYL) and 62–116 (RPNI…NKKP). DNA-binding regions (H-T-H motif) lie at residues 37–61 (WADI…KNYL) and 89–112 (WSLI…NTHL). The interval 112-133 (LNKKPNSRRQNAPESIVGATPF) is disordered.

In terms of assembly, homodimer and heterodimer with GL1. Part of the WD40-bHLH-MYB complex. Interacts with BHLH012/MYC1 and BHLH042/TT8. Interacts (via N-terminus) with GL1 and GL3. As to expression, mainly expressed in the trichomes of new leaves.

The protein localises to the nucleus. Functionally, transcription activation factor positively regulating trichomes development. Has a function nearly equivalent to that of GL1 and can complement gl1 mutants. The protein is Transcription factor MYB82 (MYB82) of Arabidopsis thaliana (Mouse-ear cress).